The chain runs to 523 residues: DNA-directed RNA polymerase subunit Rpo2N (523 aa).

A disordered region spans residues 501 to 523 (SSMGVEGIPGISMETTSTTSADD). The segment covering 513-523 (METTSTTSADD) has biased composition (polar residues).

The protein belongs to the RNA polymerase beta chain family. In terms of assembly, part of the RNA polymerase complex.

Its subcellular location is the cytoplasm. The catalysed reaction is RNA(n) + a ribonucleoside 5'-triphosphate = RNA(n+1) + diphosphate. Functionally, DNA-dependent RNA polymerase (RNAP) catalyzes the transcription of DNA into RNA using the four ribonucleoside triphosphates as substrates. The Rpo2 subunit (Rpo2N and Rpo2C in this organism) is implicated in DNA promoter recognition and in nucleotide binding. The sequence is that of DNA-directed RNA polymerase subunit Rpo2N from Halobacterium salinarum (strain ATCC 29341 / DSM 671 / R1).